Consider the following 91-residue polypeptide: Small ribosomal subunit protein uS19 (91 aa).

Belongs to the universal ribosomal protein uS19 family.

Protein S19 forms a complex with S13 that binds strongly to the 16S ribosomal RNA. In Cupriavidus taiwanensis (strain DSM 17343 / BCRC 17206 / CCUG 44338 / CIP 107171 / LMG 19424 / R1) (Ralstonia taiwanensis (strain LMG 19424)), this protein is Small ribosomal subunit protein uS19.